The primary structure comprises 226 residues: Uracil-DNA glycosylase (226 aa).

Asp-64 serves as the catalytic Proton acceptor.

It belongs to the uracil-DNA glycosylase (UDG) superfamily. UNG family.

It localises to the cytoplasm. It catalyses the reaction Hydrolyzes single-stranded DNA or mismatched double-stranded DNA and polynucleotides, releasing free uracil.. Its function is as follows. Excises uracil residues from the DNA which can arise as a result of misincorporation of dUMP residues by DNA polymerase or due to deamination of cytosine. This Vibrio campbellii (strain ATCC BAA-1116) protein is Uracil-DNA glycosylase.